The chain runs to 152 residues: MGAMWMKSMLLVLLLCMLMVTPMTGARSDNSGPWMWCDPEMGHKVSPLTRCRALVKLECVGNRVPEDVLRDCCQEVANISNEWCRCGDLGSMLRSVYAALGVGGGPEEVFPGCQKDVMKLLVAGVPALCNVPIPNEAAGTRGVCYWSASTDT.

An N-terminal signal peptide occupies residues 1–30 (MGAMWMKSMLLVLLLCMLMVTPMTGARSDN).

Belongs to the protease inhibitor I6 (cereal trypsin/alpha-amylase inhibitor) family. In terms of assembly, homodimer. Five disulfide bonds, which are essential for the inhibitor activity, are probably present. In terms of tissue distribution, endosperm.

The protein resides in the secreted. Its function is as follows. Could be involved in insect defense mechanisms. Inhibits insect-type alpha-amylase. The chain is Alpha-amylase inhibitor BDAI-1 (IAD1) from Hordeum vulgare (Barley).